The sequence spans 218 residues: Sec-independent protein translocase protein TatB (218 aa).

Residues 1 to 21 form a helical membrane-spanning segment; sequence MFDIGFSELLLVLVIGLVVLG. Disordered regions lie at residues 126 to 145 and 174 to 218; these read AESATKAQASPQAPATDVDK and SSVD…GGDR. Basic and acidic residues predominate over residues 199–218; the sequence is HSTDSHGADQPRTHQPGGDR.

It belongs to the TatB family. In terms of assembly, the Tat system comprises two distinct complexes: a TatABC complex, containing multiple copies of TatA, TatB and TatC subunits, and a separate TatA complex, containing only TatA subunits. Substrates initially bind to the TatABC complex, which probably triggers association of the separate TatA complex to form the active translocon.

It localises to the cell inner membrane. In terms of biological role, part of the twin-arginine translocation (Tat) system that transports large folded proteins containing a characteristic twin-arginine motif in their signal peptide across membranes. Together with TatC, TatB is part of a receptor directly interacting with Tat signal peptides. TatB may form an oligomeric binding site that transiently accommodates folded Tat precursor proteins before their translocation. This Yersinia enterocolitica serotype O:8 / biotype 1B (strain NCTC 13174 / 8081) protein is Sec-independent protein translocase protein TatB.